The chain runs to 244 residues: Small ribosomal subunit protein eS4 (244 aa).

The span at 1–14 (MANKGPRKHLKRLP) shows a compositional bias: basic residues. The disordered stretch occupies residues 1–36 (MANKGPRKHLKRLPAPKNWQISRKTNKYTTRPSAGP). A compositionally biased stretch (polar residues) spans 19-32 (WQISRKTNKYTTRP). Positions 43-106 (LPLLLVLRDL…NESFLVVLDE (64 aa)) constitute an S4 RNA-binding domain.

It belongs to the eukaryotic ribosomal protein eS4 family.

The protein is Small ribosomal subunit protein eS4 of Methanococcus aeolicus (strain ATCC BAA-1280 / DSM 17508 / OCM 812 / Nankai-3).